Reading from the N-terminus, the 220-residue chain is Large ribosomal subunit protein uL16 (220 aa).

This sequence belongs to the universal ribosomal protein uL16 family. In terms of assembly, component of the small ribosomal subunit. Mature ribosomes consist of a small (40S) and a large (60S) subunit. The 40S subunit contains about 33 different proteins and 1 molecule of RNA (18S). The 60S subunit contains about 49 different proteins and 3 molecules of RNA (25S, 5.8S and 5S).

This is Large ribosomal subunit protein uL16 (RPL10) from Zea mays (Maize).